The primary structure comprises 129 residues: Histone H2A.J (129 aa).

The segment at 1-22 (MSGRGKQGGKVRAKAKSRSSRA) is disordered. N6-acetyllysine is present on residues Lys-6 and Lys-10. Positions 7–19 (QGGKVRAKAKSRS) are enriched in basic residues. Lys-10 is modified (N6-lactoyllysine; alternate). Gln-105 is subject to N5-methylglutamine. At Thr-121 the chain carries Phosphothreonine; by DCAF1.

The protein belongs to the histone H2A family. The nucleosome is a histone octamer containing two molecules each of H2A, H2B, H3 and H4 assembled in one H3-H4 heterotetramer and two H2A-H2B heterodimers. The octamer wraps approximately 147 bp of DNA. In terms of processing, monoubiquitination of Lys-120 (H2AXK119ub) gives a specific tag for epigenetic transcriptional repression. Following DNA double-strand breaks (DSBs), it is ubiquitinated through 'Lys-63' linkage of ubiquitin moieties. Glutamine methylation at Gln-105 (H2AQ104me) by FBL is specifically dedicated to polymerase I. It is present at 35S ribosomal DNA locus and impairs binding of the FACT complex. Post-translationally, phosphorylation on Ser-2 (H2AS1ph) is enhanced during mitosis. Phosphorylation on Ser-2 by RPS6KA5/MSK1 directly represses transcription. Acetylation of H3 inhibits Ser-2 phosphorylation by RPS6KA5/MSK1. Phosphorylation at Thr-121 (H2AT120ph) by DCAF1 is present in the regulatory region of many tumor suppresor genes and down-regulates their transcription.

Its subcellular location is the nucleus. It is found in the chromosome. Core component of nucleosome. Nucleosomes wrap and compact DNA into chromatin, limiting DNA accessibility to the cellular machineries which require DNA as a template. Histones thereby play a central role in transcription regulation, DNA repair, DNA replication and chromosomal stability. DNA accessibility is regulated via a complex set of post-translational modifications of histones, also called histone code, and nucleosome remodeling. In Mus musculus (Mouse), this protein is Histone H2A.J.